A 162-amino-acid chain; its full sequence is Transcription elongation factor GreA (162 aa).

The stretch at 9-38 forms a coiled coil; that stretch reads QGYKALEEELARLKSERPEIIQAIKEAREE.

Belongs to the GreA/GreB family.

In terms of biological role, necessary for efficient RNA polymerase transcription elongation past template-encoded arresting sites. The arresting sites in DNA have the property of trapping a certain fraction of elongating RNA polymerases that pass through, resulting in locked ternary complexes. Cleavage of the nascent transcript by cleavage factors such as GreA or GreB allows the resumption of elongation from the new 3'terminus. GreA releases sequences of 2 to 3 nucleotides. This chain is Transcription elongation factor GreA, found in Desulfovibrio desulfuricans (strain ATCC 27774 / DSM 6949 / MB).